A 484-amino-acid chain; its full sequence is Malonate-semialdehyde dehydrogenase 1 (484 aa).

Phenylalanine 153, lysine 177, glutamate 180, arginine 181, serine 230, and threonine 252 together coordinate NAD(+). Residue cysteine 285 is the Nucleophile of the active site. Position 385 (glutamate 385) interacts with NAD(+).

The protein belongs to the aldehyde dehydrogenase family. IolA subfamily. In terms of assembly, homotetramer.

The catalysed reaction is 3-oxopropanoate + NAD(+) + CoA + H2O = hydrogencarbonate + acetyl-CoA + NADH + H(+). It catalyses the reaction 2-methyl-3-oxopropanoate + NAD(+) + CoA + H2O = propanoyl-CoA + hydrogencarbonate + NADH + H(+). The protein operates within polyol metabolism; myo-inositol degradation into acetyl-CoA; acetyl-CoA from myo-inositol: step 7/7. In terms of biological role, catalyzes the oxidation of malonate semialdehyde (MSA) and methylmalonate semialdehyde (MMSA) into acetyl-CoA and propanoyl-CoA, respectively. Is involved in a myo-inositol catabolic pathway. Bicarbonate, and not CO2, is the end-product of the enzymatic reaction. In Geobacillus thermodenitrificans (strain NG80-2), this protein is Malonate-semialdehyde dehydrogenase 1.